The following is a 238-amino-acid chain: Probable transglycosylase SceD 1 (238 aa).

Residues 1–27 (MKKTVVASTLAVGLGVTGFAAGNSADA) form the signal peptide. Over residues 87-97 (TNAPAQETAEQ) the composition is skewed to polar residues. The segment at 87–161 (TNAPAQETAE…SEASEGSSVN (75 aa)) is disordered. Positions 102–156 (EQPQQTEQASTEQPAQEAAPQTEETQQPQQEATTQTTSSSNESTSNESSSSEASE) are enriched in low complexity.

The protein belongs to the transglycosylase family. SceD subfamily.

It localises to the secreted. In terms of biological role, is able to cleave peptidoglycan and affects clumping and separation of bacterial cells. This chain is Probable transglycosylase SceD 1 (sceD1), found in Staphylococcus saprophyticus subsp. saprophyticus (strain ATCC 15305 / DSM 20229 / NCIMB 8711 / NCTC 7292 / S-41).